The sequence spans 156 residues: Protein-export protein SecB (156 aa).

The protein belongs to the SecB family. In terms of assembly, homotetramer, a dimer of dimers. One homotetramer interacts with 1 SecA dimer.

The protein resides in the cytoplasm. In terms of biological role, one of the proteins required for the normal export of preproteins out of the cell cytoplasm. It is a molecular chaperone that binds to a subset of precursor proteins, maintaining them in a translocation-competent state. It also specifically binds to its receptor SecA. The sequence is that of Protein-export protein SecB from Pectobacterium carotovorum subsp. carotovorum (strain PC1).